A 115-amino-acid chain; its full sequence is Large ribosomal subunit protein bL19 (115 aa).

It belongs to the bacterial ribosomal protein bL19 family.

Functionally, this protein is located at the 30S-50S ribosomal subunit interface and may play a role in the structure and function of the aminoacyl-tRNA binding site. The protein is Large ribosomal subunit protein bL19 of Clostridium perfringens (strain ATCC 13124 / DSM 756 / JCM 1290 / NCIMB 6125 / NCTC 8237 / Type A).